The primary structure comprises 463 residues: Hexose-6-phosphate:phosphate antiporter (463 aa).

Residues 1 to 24 lie on the Cytoplasmic side of the membrane; sequence MLAFLNQVRKPTLDLPLDVRRKMW. Residues 25 to 45 traverse the membrane as a helical segment; that stretch reads FKPFMQSYLVVFIGYLTMYLI. At 46–60 the chain is on the periplasmic side; that stretch reads RKNFNIAQNDMISTY. Residues 61 to 81 traverse the membrane as a helical segment; that stretch reads GLSMTELGMIGLGFSITYGVG. The Cytoplasmic portion of the chain corresponds to 82 to 96; the sequence is KTLVSYYADGKNTKQ. A helical membrane pass occupies residues 97–117; the sequence is FLPFMLILSAICMLGFSASMG. Residues 118 to 122 are Periplasmic-facing; it reads AGSTS. The chain crosses the membrane as a helical span at residues 123–143; that stretch reads LFLMIAFYALSGFFQSTGGSC. At 144–159 the chain is on the cytoplasmic side; that stretch reads SYSTITKWTPRRKRGT. Residues 160-180 traverse the membrane as a helical segment; sequence FLGFWNISHNLGGAGAAGVAL. Residues 181 to 189 lie on the Periplasmic side of the membrane; that stretch reads FGANYLFDG. The helical transmembrane segment at 190 to 210 threads the bilayer; that stretch reads HVIGMFIFPSIIALIVGFIGL. Over 211 to 259 the chain is Cytoplasmic; sequence RFGSDSPESYGLGKAEELFGEEISEEDKETEENEMTKWQIFVEYVLKNK. The chain crosses the membrane as a helical span at residues 260-280; sequence VIWLLCFSNIFLYVVRIGIDQ. The Periplasmic portion of the chain corresponds to 281–297; it reads WSTVYAFQELKLSKEVA. Residues 298 to 318 traverse the membrane as a helical segment; sequence IQGFTLFEVGALVGTLLWGWL. The Cytoplasmic segment spans residues 319–326; sequence SDLANGRR. The chain crosses the membrane as a helical span at residues 327–347; it reads ALVACVALALIIATLGVYQHA. Over 348-357 the chain is Periplasmic; the sequence is SNQYVYLASL. A helical membrane pass occupies residues 358-378; it reads FALGFLVFGPQLLIGVAAVGF. Residues 379-382 are Cytoplasmic-facing; it reads VPKK. A helical membrane pass occupies residues 383–403; it reads AIGAADGIKGTFAYLIGDSFA. The Periplasmic portion of the chain corresponds to 404-425; that stretch reads KLGLGMIADGTPVFGLTGWAGT. The helical transmembrane segment at 426–446 threads the bilayer; it reads FAALDAAAIGCICLMAMVAVM. Over 447 to 463 the chain is Cytoplasmic; it reads EERKIRREKKIQQVNIA.

Belongs to the major facilitator superfamily. Organophosphate:Pi antiporter (OPA) (TC 2.A.1.4) family.

It is found in the cell inner membrane. In terms of biological role, mediates the exchange of external hexose 6-phosphate and internal inorganic phosphate. In Salmonella typhimurium (strain LT2 / SGSC1412 / ATCC 700720), this protein is Hexose-6-phosphate:phosphate antiporter (uhpT).